We begin with the raw amino-acid sequence, 297 residues long: Nitrogenase iron protein 2 (297 aa).

14-21 (GKGGIGKS) serves as a coordination point for ATP. Cys102 provides a ligand contact to [4Fe-4S] cluster. Arg105 carries the post-translational modification ADP-ribosylarginine; by dinitrogenase reductase ADP-ribosyltransferase. Cys136 contacts [4Fe-4S] cluster.

The protein belongs to the NifH/BchL/ChlL family. As to quaternary structure, homodimer. Requires [4Fe-4S] cluster as cofactor. The reversible ADP-ribosylation of Arg-105 inactivates the nitrogenase reductase and regulates nitrogenase activity.

The catalysed reaction is N2 + 8 reduced [2Fe-2S]-[ferredoxin] + 16 ATP + 16 H2O = H2 + 8 oxidized [2Fe-2S]-[ferredoxin] + 2 NH4(+) + 16 ADP + 16 phosphate + 6 H(+). Its function is as follows. The key enzymatic reactions in nitrogen fixation are catalyzed by the nitrogenase complex, which has 2 components: the iron protein and the molybdenum-iron protein. This Nostoc sp. (strain PCC 7120 / SAG 25.82 / UTEX 2576) protein is Nitrogenase iron protein 2 (nifH2).